The sequence spans 82 residues: Sulfur carrier protein TusA (82 aa).

Cys-20 (cysteine persulfide intermediate) is an active-site residue.

Belongs to the sulfur carrier protein TusA family.

It localises to the cytoplasm. Its function is as follows. Sulfur carrier protein which probably makes part of a sulfur-relay system. The polypeptide is Sulfur carrier protein TusA (Aeromonas hydrophila subsp. hydrophila (strain ATCC 7966 / DSM 30187 / BCRC 13018 / CCUG 14551 / JCM 1027 / KCTC 2358 / NCIMB 9240 / NCTC 8049)).